A 75-amino-acid polypeptide reads, in one-letter code: Exodeoxyribonuclease 7 small subunit (75 aa).

Belongs to the XseB family. Heterooligomer composed of large and small subunits.

The protein localises to the cytoplasm. It catalyses the reaction Exonucleolytic cleavage in either 5'- to 3'- or 3'- to 5'-direction to yield nucleoside 5'-phosphates.. Functionally, bidirectionally degrades single-stranded DNA into large acid-insoluble oligonucleotides, which are then degraded further into small acid-soluble oligonucleotides. The polypeptide is Exodeoxyribonuclease 7 small subunit (Clostridium perfringens (strain ATCC 13124 / DSM 756 / JCM 1290 / NCIMB 6125 / NCTC 8237 / Type A)).